A 369-amino-acid chain; its full sequence is Ubiquitin carboxyl-terminal hydrolase 12 (369 aa).

Positions 1–4 (MEIL) match the Required for plasma membrane localization of USP12/WDR20 motif. The USP domain maps to 39–368 (FGLVNFGNTC…SGYILFYQSR (330 aa)). Cysteine 48 serves as the catalytic Nucleophile. The segment at 145 to 165 (KQEKQNGRLPNGNIDSENNST) is disordered. Zn(2+) contacts are provided by cysteine 185, cysteine 188, cysteine 232, and cysteine 235. The active-site Proton acceptor is the histidine 316.

It belongs to the peptidase C19 family. USP12/USP46 subfamily. As to quaternary structure, interacts with WDR48. Interacts with WDR20; this interaction promotes translocation of the USP12 complex to the plasma membrane. Component of the USP12/WDR20/WDR48 deubiquitinating complex. Component of the USP12/WDR20/WDR48 deubiquitinating complex. Interacts with PHLPP1. Interacts with RBPJ. Interacts with CBP; this interaction blocks the acetyltransferase activity of CREBBP.

Its subcellular location is the nucleus. The protein resides in the cytoplasm. It localises to the cell membrane. The catalysed reaction is Thiol-dependent hydrolysis of ester, thioester, amide, peptide and isopeptide bonds formed by the C-terminal Gly of ubiquitin (a 76-residue protein attached to proteins as an intracellular targeting signal).. Its activity is regulated as follows. Activated by interaction with WDR20, WDR48 and DMWD through different allosteric mechanisms. Deubiquitinating enzyme that plays various roles in the regulation of the immune response and inflammation. During TCR engagement and activation, translocates into the cytoplasm and deubiquitinates its substrates LAT and TRAT1 and prevents their lysosome-dependent degradation to stabilize the TCR signaling complex at the plasma membrane. Plays an essential role in the selective LPS-induced macrophage response through the activation of NF-kappa-B pathway. In addition, promotes that antiviral immune response through targeting DNA sensor IFI16 to inhibit its proteasome-dependent degradation. Participates in the interferon signaling pathway and antiviral response independently of its deubiquitinase activity by maintaining nuclear phosphorylated STAT1 levels via inhibition of its CREBBP-mediated acetylation and subsequent dephosphorylation. Plays an intrinsic role in promoting the differentiation, activation and proliferation of CD4(+) T-cell by activating the NF-kappa-B signaling pathway through deubiquitinating and stabilizing B-cell lymphoma/leukemia 10/BCL10. In myeloid-derived suppressor cells promotes the activation of the NF-kappa-B via deubiquitination and stabilization of RELA. Regulates the 'Lys-63'-linked polyubiquitin chains of BAX and thereby modulates the mitochondrial apoptotic process. Negative regulator of NOTCH signaling that specifically deubiquitinates non-activated NOTCH receptors to target them for lysosomal degradation; deubiquitination of NOTCH stimulates its transport form late endosomes to lysosomes. Protects neurons against HTT/huntingtin-induced polyglutamine expansion-dependent neurodegeneration through regulation of autophagic flux. This function is independent of deubiquitinase activity or of other components of the USP12-WDR20-WDR48 deubiquitinating complex. In complex with WDR48, acts as a potential tumor suppressor by positively regulating PHLPP1 stability. In Bos taurus (Bovine), this protein is Ubiquitin carboxyl-terminal hydrolase 12 (USP12).